A 92-amino-acid chain; its full sequence is Small ribosomal subunit protein uS19 (92 aa).

It belongs to the universal ribosomal protein uS19 family.

In terms of biological role, protein S19 forms a complex with S13 that binds strongly to the 16S ribosomal RNA. This Aeromonas hydrophila subsp. hydrophila (strain ATCC 7966 / DSM 30187 / BCRC 13018 / CCUG 14551 / JCM 1027 / KCTC 2358 / NCIMB 9240 / NCTC 8049) protein is Small ribosomal subunit protein uS19.